The following is a 729-amino-acid chain: Fatty acid oxidation complex subunit alpha (729 aa).

The interval 1–189 (MLYKGDTLYL…KIGLVDGVVK (189 aa)) is enoyl-CoA hydratase/isomerase. A substrate-binding site is contributed by Asp-296. The tract at residues 311–729 (ETPKQAAVLG…ARPVGDLKTA (419 aa)) is 3-hydroxyacyl-CoA dehydrogenase. NAD(+) contacts are provided by residues Met-324, Asp-343, 400–402 (VVE), Lys-407, and Ser-429. His-450 (for 3-hydroxyacyl-CoA dehydrogenase activity) is an active-site residue. An NAD(+)-binding site is contributed by Asn-453. Residues Asn-500 and Tyr-660 each coordinate substrate. Residues 708–729 (RHNEPYYPPVEPARPVGDLKTA) form a disordered region.

The protein in the N-terminal section; belongs to the enoyl-CoA hydratase/isomerase family. It in the C-terminal section; belongs to the 3-hydroxyacyl-CoA dehydrogenase family. In terms of assembly, heterotetramer of two alpha chains (FadB) and two beta chains (FadA).

The enzyme catalyses a (3S)-3-hydroxyacyl-CoA + NAD(+) = a 3-oxoacyl-CoA + NADH + H(+). It catalyses the reaction a (3S)-3-hydroxyacyl-CoA = a (2E)-enoyl-CoA + H2O. It carries out the reaction a 4-saturated-(3S)-3-hydroxyacyl-CoA = a (3E)-enoyl-CoA + H2O. The catalysed reaction is (3S)-3-hydroxybutanoyl-CoA = (3R)-3-hydroxybutanoyl-CoA. The enzyme catalyses a (3Z)-enoyl-CoA = a 4-saturated (2E)-enoyl-CoA. It catalyses the reaction a (3E)-enoyl-CoA = a 4-saturated (2E)-enoyl-CoA. It participates in lipid metabolism; fatty acid beta-oxidation. In terms of biological role, involved in the aerobic and anaerobic degradation of long-chain fatty acids via beta-oxidation cycle. Catalyzes the formation of 3-oxoacyl-CoA from enoyl-CoA via L-3-hydroxyacyl-CoA. It can also use D-3-hydroxyacyl-CoA and cis-3-enoyl-CoA as substrate. This Citrobacter koseri (strain ATCC BAA-895 / CDC 4225-83 / SGSC4696) protein is Fatty acid oxidation complex subunit alpha.